The following is a 219-amino-acid chain: MSTCGMCAGSSYCPHHQRASWPAHDHRSPPPVEYHDFFHHSVQGQAAAWLRLDNPPLPQPAEHDQAAAGMIHGGHRHGTFELNRPLMDDQHLLQMPPPPTIMPFGGGTFGDTMGREAIMAVDGEMMMVAAHHPTMHEREAKVMRYREKKKRRRYEKQIRYESRKAYAEMRPRVKGRFAKVPGSAAPPSPPPSGPRIYIASCFKSNGTVIVQEVMHDLPI.

One can recognise a CCT domain in the interval 138–180; sequence REAKVMRYREKKKRRRYEKQIRYESRKAYAEMRPRVKGRFAKV.

Mainly expressed in leaves, and at low levels in the shoot apical meristem (SAM).

It localises to the nucleus. Its function is as follows. Involved in the regulation of vernalization; this process in essential for flowering in cv. Bd29-1 but seems do not occur in cv. Bd21. The polypeptide is Protein VERNALIZATION 2 (Brachypodium distachyon (Purple false brome)).